The primary structure comprises 168 residues: Crossover junction endodeoxyribonuclease RuvC (168 aa).

Active-site residues include Asp-7, Glu-67, and His-139. Residues Asp-7, Glu-67, and His-139 each contribute to the Mg(2+) site.

It belongs to the RuvC family. As to quaternary structure, homodimer which binds Holliday junction (HJ) DNA. The HJ becomes 2-fold symmetrical on binding to RuvC with unstacked arms; it has a different conformation from HJ DNA in complex with RuvA. In the full resolvosome a probable DNA-RuvA(4)-RuvB(12)-RuvC(2) complex forms which resolves the HJ. Requires Mg(2+) as cofactor.

Its subcellular location is the cytoplasm. It catalyses the reaction Endonucleolytic cleavage at a junction such as a reciprocal single-stranded crossover between two homologous DNA duplexes (Holliday junction).. Its function is as follows. The RuvA-RuvB-RuvC complex processes Holliday junction (HJ) DNA during genetic recombination and DNA repair. Endonuclease that resolves HJ intermediates. Cleaves cruciform DNA by making single-stranded nicks across the HJ at symmetrical positions within the homologous arms, yielding a 5'-phosphate and a 3'-hydroxyl group; requires a central core of homology in the junction. The consensus cleavage sequence is 5'-(A/T)TT(C/G)-3'. Cleavage occurs on the 3'-side of the TT dinucleotide at the point of strand exchange. HJ branch migration catalyzed by RuvA-RuvB allows RuvC to scan DNA until it finds its consensus sequence, where it cleaves and resolves the cruciform DNA. This Deinococcus geothermalis (strain DSM 11300 / CIP 105573 / AG-3a) protein is Crossover junction endodeoxyribonuclease RuvC.